Reading from the N-terminus, the 274-residue chain is Large ribosomal subunit protein uL2cz (274 aa).

2 disordered regions span residues 1–25 (MAIH…VKSN) and 224–274 (NPVD…RRSK). Positions 7-25 (KTSTPSTRNGTVDSQVKSN) are enriched in polar residues.

The protein belongs to the universal ribosomal protein uL2 family. Part of the 50S ribosomal subunit.

The protein resides in the plastid. It localises to the chloroplast. The chain is Large ribosomal subunit protein uL2cz (rpl2-A) from Atropa belladonna (Belladonna).